Here is a 308-residue protein sequence, read N- to C-terminus: Inosose dehydratase (308 aa).

This sequence belongs to the IolE/MocC family. Glutathione serves as cofactor. It depends on Co(2+) as a cofactor. Requires Mn(2+) as cofactor.

It carries out the reaction scyllo-inosose = 3D-3,5/4-trihydroxycyclohexane-1,2-dione + H2O. It participates in polyol metabolism; myo-inositol degradation into acetyl-CoA; acetyl-CoA from myo-inositol: step 2/7. Catalyzes the dehydration of inosose (2-keto-myo-inositol, 2KMI or 2,4,6/3,5-pentahydroxycyclohexanone) to 3D-(3,5/4)-trihydroxycyclohexane-1,2-dione (D-2,3-diketo-4-deoxy-epi-inositol). The chain is Inosose dehydratase from Geobacillus kaustophilus (strain HTA426).